Reading from the N-terminus, the 446-residue chain is Signal recognition particle protein (446 aa).

GTP is bound by residues 108 to 115 (GLQGAGKT), 191 to 195 (DTAGR), and 249 to 252 (TKLD).

This sequence belongs to the GTP-binding SRP family. SRP54 subfamily. Part of the signal recognition particle protein translocation system, which is composed of SRP and FtsY. Interacts with a small cytoplasmic RNA (sc-RNA).

It localises to the cytoplasm. It carries out the reaction GTP + H2O = GDP + phosphate + H(+). Its function is as follows. Involved in targeting and insertion of nascent membrane proteins into the cytoplasmic membrane. Binds to the hydrophobic signal sequence of the ribosome-nascent chain (RNC) as it emerges from the ribosomes. The SRP-RNC complex is then targeted to the cytoplasmic membrane where it interacts with the SRP receptor FtsY. Interaction with FtsY leads to the transfer of the RNC complex to the Sec translocase for insertion into the membrane, the hydrolysis of GTP by both Ffh and FtsY, and the dissociation of the SRP-FtsY complex into the individual components. In Bacillus subtilis (strain 168), this protein is Signal recognition particle protein.